A 118-amino-acid polypeptide reads, in one-letter code: MKFQPLGERVLVERLEEENKTSSGIIIPDNAKEKPLMGVVKAVSHKISEGCKCVKEGDVIAFGKYKGAEIVLDGTEYMVLELEDILGIVGSGSCCHTGNHDHKHAKEHEACCHDHKKH.

This sequence belongs to the GroES chaperonin family. Heptamer of 7 subunits arranged in a ring. Interacts with the chaperonin GroEL.

The protein localises to the cytoplasm. Its function is as follows. Together with the chaperonin GroEL, plays an essential role in assisting protein folding. The GroEL-GroES system forms a nano-cage that allows encapsulation of the non-native substrate proteins and provides a physical environment optimized to promote and accelerate protein folding. GroES binds to the apical surface of the GroEL ring, thereby capping the opening of the GroEL channel. This Helicobacter pylori (strain HPAG1) protein is Co-chaperonin GroES.